The sequence spans 569 residues: Aspartate--tRNA ligase, cytoplasmic 2 (569 aa).

A disordered region spans residues M1–E23. The aspartate stretch occupies residues Q292 to R295. An L-aspartate-binding site is contributed by R314. ATP is bound by residues R314–D316 and R322–L324. Residues S475 and R479 each coordinate L-aspartate. G540–R543 contributes to the ATP binding site.

It belongs to the class-II aminoacyl-tRNA synthetase family. Type 2 subfamily.

The protein resides in the cytoplasm. The enzyme catalyses tRNA(Asp) + L-aspartate + ATP = L-aspartyl-tRNA(Asp) + AMP + diphosphate. In Dictyostelium discoideum (Social amoeba), this protein is Aspartate--tRNA ligase, cytoplasmic 2 (aspS2).